The chain runs to 430 residues: WD repeat-containing protein jip5 (430 aa).

6 WD repeats span residues 9–48, 72–111, 117–158, 215–262, 272–318, and 323–360; these read PLSS…AAAE, RHKG…VTSK, TNTD…SFKS, DQEE…DQSE, AGGE…GVVE, and DDIE…EEEE. Over residues 356–374 the composition is skewed to acidic residues; it reads EEEEEEEEEEQEDIEDNDD. Residues 356 to 430 form a disordered region; the sequence is EEEEEEEEEE…NGILKFKGME (75 aa). Residues 382 to 397 are compositionally biased toward basic and acidic residues; that stretch reads HALERDSDDSDARADS. Basic residues predominate over residues 405 to 416; it reads RKKRKKKKKGKK.

The protein belongs to the WD repeat WDR55 family.

The protein resides in the nucleus. It localises to the nucleolus. This chain is WD repeat-containing protein jip5 (jip5), found in Botryotinia fuckeliana (strain B05.10) (Noble rot fungus).